A 504-amino-acid chain; its full sequence is Probable chlorophyll(ide) b reductase NYC1, chloroplastic (504 aa).

Residues 1–33 (MAAAAVVHLSVHGRLRRSPELHARPYHRPSLLR) constitute a chloroplast transit peptide. The interval 41 to 63 (ADNGGEEASSSPPPPTTAEARRR) is disordered. 2 helical membrane passes run 114–134 (YVIT…LSGG) and 141–161 (LIWY…ANSV). Residue 175–199 (ITGSTRGLGKALAREFLLSGDRVVI) coordinates NAD(+). The Proton acceptor role is filled by tyrosine 339. Residues 479-499 (WVSVFSLSVVCAFIILSSSGG) form a helical membrane-spanning segment.

Belongs to the short-chain dehydrogenases/reductases (SDR) family. In terms of assembly, interacts with NOL to form a complex that acts as a chlorophyll b reductase. In terms of tissue distribution, expressed in leaves and stems. Also detected in non-photosynthetic tissues such as roots.

It is found in the plastid. The protein localises to the chloroplast thylakoid membrane. It catalyses the reaction 7(1)-hydroxychlorophyllide a + NAD(+) = chlorophyllide b + NADH + H(+). It carries out the reaction 7(1)-hydroxychlorophyllide a + NADP(+) = chlorophyllide b + NADPH + H(+). Its function is as follows. Required for proper chloroplast degradation. Involved in chlorophyll b degradation. This Oryza sativa subsp. japonica (Rice) protein is Probable chlorophyll(ide) b reductase NYC1, chloroplastic (NYC1).